The following is a 445-amino-acid chain: Xylose isomerase (445 aa).

Catalysis depends on residues histidine 109 and aspartate 112. Residues glutamate 240, glutamate 276, histidine 279, aspartate 304, aspartate 315, aspartate 317, and aspartate 347 each contribute to the Mg(2+) site.

This sequence belongs to the xylose isomerase family. Homotetramer. The cofactor is Mg(2+).

It is found in the cytoplasm. The catalysed reaction is alpha-D-xylose = alpha-D-xylulofuranose. This Xanthomonas oryzae pv. oryzae (strain MAFF 311018) protein is Xylose isomerase.